The chain runs to 305 residues: UPF0282 protein Pisl_0021 (305 aa).

This sequence belongs to the UPF0282 family.

This Pyrobaculum islandicum (strain DSM 4184 / JCM 9189 / GEO3) protein is UPF0282 protein Pisl_0021.